The sequence spans 148 residues: MAGNKMFCRPRRQRLSHSRRAELQFPVSHLERCLRESQHARHLSSTTPVFLAGVLEYLTANILEKVGKEVKNSCRLCITPEHVKRALQKDEQLRWILELEDDTHSQVEEMPQSEEEEEEEEEKEEEMVVLVVMGGRRRRRRRRRRKDS.

A disordered region spans residues 101–128 (DDTHSQVEEMPQSEEEEEEEEEKEEEMV). Residues 111-127 (PQSEEEEEEEEEKEEEM) show a composition bias toward acidic residues.

The protein belongs to the histone H2A family. As to quaternary structure, the nucleosome is a histone octamer containing two molecules each of H2A, H2B, H3 and H4 assembled in one H3-H4 heterotetramer and two H2A-H2B heterodimers. The octamer wraps approximately 147 bp of DNA.

The protein resides in the nucleus. Its subcellular location is the chromosome. Core component of nucleosome. Nucleosomes wrap and compact DNA into chromatin, limiting DNA accessibility to the cellular machineries which require DNA as a template. Histones thereby play a central role in transcription regulation, DNA repair, DNA replication and chromosomal stability. DNA accessibility is regulated via a complex set of post-translational modifications of histones, also called histone code, and nucleosome remodeling. This Homo sapiens (Human) protein is Histone H2A-like 3.